The primary structure comprises 169 residues: Centrosomal protein 20 (169 aa).

Residues 1–104 (MATVGDLKAV…VVEDLNSQSV (104 aa)) form a necessary and sufficient for homooligomerization and localization to centrosomes and pericentriolar satellites region. Positions 49–81 (ENLLINELIREYLAFNKYSYTSSVLTAETGLSE) constitute a LisH domain. Residues 135 to 169 (TFRNIPRGRNTKDTHSGPVQLTQTSTEDWHQRRHR) form a disordered region. Over residues 151 to 160 (GPVQLTQTST) the composition is skewed to polar residues.

Belongs to the CEP43 family. As to quaternary structure, homooligomer; probably required for localization to centrosomes.

It localises to the cell projection. It is found in the cilium. Its subcellular location is the cytoplasm. The protein resides in the cytoskeleton. The protein localises to the cilium basal body. It localises to the microtubule organizing center. It is found in the centrosome. Its subcellular location is the cytoplasmic granule. The protein resides in the centriolar satellite. Its function is as follows. Involved in the biogenesis of cilia. Required for the recruitment of PLK1 to centrosomes and S phase progression. In Xenopus laevis (African clawed frog), this protein is Centrosomal protein 20 (Cep20).